Consider the following 81-residue polypeptide: Sulfur carrier protein TusA (81 aa).

Cysteine 19 serves as the catalytic Cysteine persulfide intermediate.

This sequence belongs to the sulfur carrier protein TusA family.

Its subcellular location is the cytoplasm. Functionally, sulfur carrier protein which probably makes part of a sulfur-relay system. In Shewanella denitrificans (strain OS217 / ATCC BAA-1090 / DSM 15013), this protein is Sulfur carrier protein TusA.